Here is a 395-residue protein sequence, read N- to C-terminus: Elongation factor Tu (395 aa).

The region spanning 10–204 is the tr-type G domain; it reads KPHVNIGTIG…AVDSYIPTPE (195 aa). The G1 stretch occupies residues 19–26; sequence GHVDHGKT. GTP is bound at residue 19–26; the sequence is GHVDHGKT. Threonine 26 serves as a coordination point for Mg(2+). The G2 stretch occupies residues 60–64; the sequence is GITIS. The tract at residues 81-84 is G3; it reads DCPG. GTP is bound by residues 81–85 and 136–139; these read DCPGH and NKCD. A G4 region spans residues 136–139; sequence NKCD. The G5 stretch occupies residues 174–176; sequence SAL.

The protein belongs to the TRAFAC class translation factor GTPase superfamily. Classic translation factor GTPase family. EF-Tu/EF-1A subfamily. As to quaternary structure, monomer. Phosphorylated on serine and/or threonine residue(s). Dephosphorylated by stp.

It localises to the cytoplasm. The catalysed reaction is GTP + H2O = GDP + phosphate + H(+). Its function is as follows. GTP hydrolase that promotes the GTP-dependent binding of aminoacyl-tRNA to the A-site of ribosomes during protein biosynthesis. The chain is Elongation factor Tu from Listeria innocua serovar 6a (strain ATCC BAA-680 / CLIP 11262).